A 503-amino-acid chain; its full sequence is ATP synthase subunit alpha (503 aa).

Residue 169 to 176 (GDRKTGKT) participates in ATP binding.

This sequence belongs to the ATPase alpha/beta chains family. F-type ATPases have 2 components, CF(1) - the catalytic core - and CF(0) - the membrane proton channel. CF(1) has five subunits: alpha(3), beta(3), gamma(1), delta(1), epsilon(1). CF(0) has three main subunits: a(1), b(2) and c(9-12). The alpha and beta chains form an alternating ring which encloses part of the gamma chain. CF(1) is attached to CF(0) by a central stalk formed by the gamma and epsilon chains, while a peripheral stalk is formed by the delta and b chains.

Its subcellular location is the cell membrane. The enzyme catalyses ATP + H2O + 4 H(+)(in) = ADP + phosphate + 5 H(+)(out). Its function is as follows. Produces ATP from ADP in the presence of a proton gradient across the membrane. The alpha chain is a regulatory subunit. This is ATP synthase subunit alpha from Lactobacillus helveticus (strain DPC 4571).